We begin with the raw amino-acid sequence, 197 residues long: Imidazoleglycerol-phosphate dehydratase (197 aa).

The protein belongs to the imidazoleglycerol-phosphate dehydratase family.

The protein localises to the cytoplasm. The catalysed reaction is D-erythro-1-(imidazol-4-yl)glycerol 3-phosphate = 3-(imidazol-4-yl)-2-oxopropyl phosphate + H2O. It participates in amino-acid biosynthesis; L-histidine biosynthesis; L-histidine from 5-phospho-alpha-D-ribose 1-diphosphate: step 6/9. The sequence is that of Imidazoleglycerol-phosphate dehydratase from Hahella chejuensis (strain KCTC 2396).